The primary structure comprises 250 residues: Deoxynucleoside kinase (250 aa).

ATP is bound at residue 27–35; sequence GNIGSGKTT. 3 residues coordinate substrate: Glu-52, Tyr-70, and Gln-81. Glu-104 functions as the Proton acceptor in the catalytic mechanism. Residues Arg-105 and Glu-172 each contribute to the substrate site. Residues Ser-236, Ser-241, and Ser-243 each carry the phosphoserine modification.

Belongs to the DCK/DGK family. In terms of assembly, monomer.

The enzyme catalyses a 2'-deoxyribonucleoside + ATP = a 2'-deoxyribonucleoside 5'-phosphate + ADP + H(+). With respect to regulation, subject to feedback inhibition by dTTP. Its function is as follows. Deoxyribonucleoside kinase that has a broad specificity phosphorylating thymidine, 2'-deoxyriboadenosine, 2'-deoxyribocytidine and 2'-deoxyriboguanosine. Specificity is higher for pyrimidine nucleosides. Several anti-viral and anti-cancer nucleoside analogs are also efficiently phosphorylated. This Drosophila melanogaster (Fruit fly) protein is Deoxynucleoside kinase (dnk).